The primary structure comprises 810 residues: Abnormal pharyngeal pumping eat-20 (810 aa).

Residues 1–20 (MTTFCRVLLIFGIYVAVCCA) form the signal peptide. Residues 21–748 (QSVEDDVFHF…GKQSSAAASW (728 aa)) are Extracellular-facing. N90, N171, and N232 each carry an N-linked (GlcNAc...) asparagine glycan. 3 consecutive EGF-like domains span residues 220–257 (PPSP…DRCE), 258–293 (LDVC…LLCE), and 301–335 (VAPI…ANCN). Cystine bridges form between C224–C235, C229–C245, C247–C256, C261–C272, C266–C281, C283–C292, C305–C314, C309–C323, and C325–C334. A glycan (N-linked (GlcNAc...) asparagine) is linked at N371. Residues 522-531 (FAPTTGTQQP) show a composition bias toward low complexity. 2 disordered regions span residues 522–567 (FAPT…STMQ) and 684–738 (PHPQ…HTSS). Positions 542 to 558 (DENEEEEEEETTEETEE) are enriched in acidic residues. Residues 749–769 (IIAIIALIVLGLLLLATSLFI) traverse the membrane as a helical segment. Residues 770–810 (LRYIRQSRKLHGKYNPAREEHNLSAAYAMPMSHIAKEERLI) are Cytoplasmic-facing.

In terms of tissue distribution, highly expressed in the pharynx, circumpharyngeal cells, pharyngeal-intestinal valve and a subset of neurons in larval and embryonic stages. Also moderately expressed in the lining of the intestine, coelomocytes, labial process bundles and some hypodermal cells. In adults, it is predominantly expressed in the pharynx, the pharyngeal-intenstinal valve, some circumpharyngeal cells, m3, m4 and m6 pharyngeal muscles, and IL1, OLQ, BAG and ALN neurons. Weaker expression is observed in labial process bundles, coelomocytes, the ventral hypodermal ridge, the vulval hypodermis and the sensory rays of the adult male tail.

The protein localises to the membrane. In terms of biological role, regulates pharyngeal pumping during feeding. In Caenorhabditis elegans, this protein is Abnormal pharyngeal pumping eat-20 (eat-20).